We begin with the raw amino-acid sequence, 120 residues long: NAD(P)H-quinone oxidoreductase subunit 3, chloroplastic (120 aa).

The next 3 membrane-spanning stretches (helical) occupy residues 9 to 29 (IFWA…LISG), 64 to 84 (MFAL…PWAM), and 88 to 108 (VLGV…IVGS).

The protein belongs to the complex I subunit 3 family. As to quaternary structure, NDH is composed of at least 16 different subunits, 5 of which are encoded in the nucleus.

The protein localises to the plastid. It is found in the chloroplast thylakoid membrane. The catalysed reaction is a plastoquinone + NADH + (n+1) H(+)(in) = a plastoquinol + NAD(+) + n H(+)(out). It catalyses the reaction a plastoquinone + NADPH + (n+1) H(+)(in) = a plastoquinol + NADP(+) + n H(+)(out). In terms of biological role, NDH shuttles electrons from NAD(P)H:plastoquinone, via FMN and iron-sulfur (Fe-S) centers, to quinones in the photosynthetic chain and possibly in a chloroplast respiratory chain. The immediate electron acceptor for the enzyme in this species is believed to be plastoquinone. Couples the redox reaction to proton translocation, and thus conserves the redox energy in a proton gradient. The polypeptide is NAD(P)H-quinone oxidoreductase subunit 3, chloroplastic (Calycanthus floridus var. glaucus (Eastern sweetshrub)).